The sequence spans 200 residues: Late protein I196L (200 aa).

A run of 2 repeats spans residues 28–48 and 49–69. Residues 70–91 form a 3; approximate repeat; that stretch reads SNYLTSAISTNISDKEEDTPFS.

It belongs to the asfivirus I196L family.

This is Late protein I196L from African swine fever virus (isolate Tick/South Africa/Pretoriuskop Pr4/1996) (ASFV).